The sequence spans 159 residues: Transmembrane protein 42 (159 aa).

Helical transmembrane passes span 37–57 (FWGVFNCLCAGAFGALAAASA), 68–88 (GFCVLGIIMMATTNSLMWTFF), 100–120 (IASVTVTFSNILNSAFLGFVL), and 124–144 (CQEVLWWGGVFLILCGLTLIH).

It localises to the membrane. The chain is Transmembrane protein 42 (TMEM42) from Bos taurus (Bovine).